Here is an 87-residue protein sequence, read N- to C-terminus: UPF0367 protein SynWH7803_2240 (87 aa).

The protein belongs to the UPF0367 family.

This Synechococcus sp. (strain WH7803) protein is UPF0367 protein SynWH7803_2240.